Consider the following 2448-residue polypeptide: Cysteine repeat modular protein 1 (2448 aa).

Residues 9 to 29 (TSTNLLNIFALYFSAICFIYC) traverse the membrane as a helical segment. 9 N-linked (GlcNAc...) asparagine glycosylation sites follow: Asn-48, Asn-89, Asn-248, Asn-284, Asn-461, Asn-503, Asn-542, Asn-598, and Asn-619. 4 FU repeats span residues 431–481 (KNTC…GYYF), 485–530 (FMQC…GFYI), 535–566 (NFKCEKCNASCLSCTGPSFDQCLSCKSGFYLS), and 567–611 (SNTC…GQFA). 10 FU repeats span residues 645–694 (NNQC…GYFP), 698–727 (TSVCQACQGKCKTCTSSNTCSSCINGYYLQ), 728–772 (DSNC…GTFG), 775–813 (QNICQTCIDGCQTCYGPTLLECYSCEQGFFFQAFQITNN), 819–868 (KGMC…YYLS), 904–947 (GRVC…GFPD), 950–983 (QNVCVACHPTCVTCQGPLATDCLTCISGYYLNPA), 984–1027 (NNIC…RTYP), 1063–1109 (QGAC…NQYV), and 1113–1144 (QNRCLPCFYSCSSCFGPNSNQCFSCQPNGFYL). N-linked (GlcNAc...) asparagine glycans are attached at residues Asn-761 and Asn-812. N-linked (GlcNAc...) asparagine glycosylation occurs at Asn-934. N-linked (GlcNAc...) asparagine glycosylation is present at Asn-1002. An N-linked (GlcNAc...) asparagine glycan is attached at Asn-1146. An FU 15 repeat occupies 1147–1193 (QTQCSICDISCLQCSGPGFDSCIQCAQGYYKLGDSVCVQSCPDGFFL). N-linked (GlcNAc...) asparagine glycosylation occurs at Asn-1194. 5 FU repeats span residues 1197-1232 (NNQCQSCNQVCFNCNGPQNSDCTSCAAGYYQSISNQ), 1234-1279 (GIIC…GYRS), 1281-1332 (KGVC…GTFQ), 1346-1394 (SYYC…GFIL), and 1402-1436 (NQYCKVCKINCVSCIQQFFYYQENCYSSCPVGTVQ). Asn-1296, Asn-1328, and Asn-1365 each carry an N-linked (GlcNAc...) asparagine glycan. 4 N-linked (GlcNAc...) asparagine glycosylation sites follow: Asn-1506, Asn-1601, Asn-1628, and Asn-1670. Residues 1739 to 1773 (SDISCSLNLCMNSGKCVPNSIFCSCPSAFTGPKCQ) enclose the EGF-like domain. Disulfide bonds link Cys-1743-Cys-1754, Cys-1748-Cys-1761, and Cys-1763-Cys-1772. N-linked (GlcNAc...) asparagine glycosylation is found at Asn-1800, Asn-1849, Asn-1877, Asn-1942, Asn-2117, Asn-2155, and Asn-2179. The next 2 helical transmembrane spans lie at 2201 to 2221 (LYIMIIISLGIGAAFLGYSAI) and 2238 to 2258 (IYFLYYFPIISFLVGPTNQFV). Asn-2260 is a glycosylation site (N-linked (GlcNAc...) asparagine). The next 4 membrane-spanning stretches (helical) occupy residues 2267-2287 (SLTIIASHFAFSSIYVQILPF), 2296-2316 (ILTSIITVSSTSVCIYWTIGV), 2352-2372 (MIGLVLAVLALISISVFIGLC), and 2386-2406 (AVFLIDLIADAIVVFILIIVG).

The protein resides in the membrane. Its function is as follows. Required for mucocyst secretion. In Tetrahymena thermophila (strain SB210), this protein is Cysteine repeat modular protein 1.